The primary structure comprises 669 residues: UvrABC system protein B (669 aa).

Positions 26-414 (TNFHAGIAKQ…AGEVIELLVR (389 aa)) constitute a Helicase ATP-binding domain. Residue 39 to 46 (GVTGSGKT) coordinates ATP. Positions 92–115 (YYDYYQPEAYVPASDTFIEKDSSI) match the Beta-hairpin motif. A Helicase C-terminal domain is found at 435–597 (LISQINVCIK…SVVRPISDIL (163 aa)). The 36-residue stretch at 631-666 (AAQMKVLEQQMYQHARDLEFEDAARIRDQIQRLREA) folds into the UVR domain.

It belongs to the UvrB family. As to quaternary structure, forms a heterotetramer with UvrA during the search for lesions. Interacts with UvrC in an incision complex.

Its subcellular location is the cytoplasm. Functionally, the UvrABC repair system catalyzes the recognition and processing of DNA lesions. A damage recognition complex composed of 2 UvrA and 2 UvrB subunits scans DNA for abnormalities. Upon binding of the UvrA(2)B(2) complex to a putative damaged site, the DNA wraps around one UvrB monomer. DNA wrap is dependent on ATP binding by UvrB and probably causes local melting of the DNA helix, facilitating insertion of UvrB beta-hairpin between the DNA strands. Then UvrB probes one DNA strand for the presence of a lesion. If a lesion is found the UvrA subunits dissociate and the UvrB-DNA preincision complex is formed. This complex is subsequently bound by UvrC and the second UvrB is released. If no lesion is found, the DNA wraps around the other UvrB subunit that will check the other stand for damage. This Xylella fastidiosa (strain 9a5c) protein is UvrABC system protein B.